The chain runs to 1091 residues: Rho GTPase-activating protein 7 (1091 aa).

The 68-residue stretch at 11-78 folds into the SAM domain; it reads LTQIEAKEAC…LNKCAVMKLE (68 aa). Residues Ser86, Ser89, and Ser320 each carry the phosphoserine modification. The segment at 273–447 is focal adhesion-targeting (FAT); sequence QLNCVEISAL…RLSIYDNVPG (175 aa). Disordered stretches follow at residues 292 to 327, 382 to 439, and 491 to 553; these read VRKR…RTRS, PKAL…SSRL, and SDEG…GVGA. Composition is skewed to low complexity over residues 297–323 and 386–400; these read VSNS…SPVT and SNGS…SSVN. Residues 414-425 are compositionally biased toward basic and acidic residues; it reads LRRENSSDSPKE. Over residues 499–511 the composition is skewed to polar residues; sequence ALDSVSPCPSSPK. Residues 513–523 show a composition bias toward basic and acidic residues; that stretch reads IHLDVDNDRAT. Polar residues predominate over residues 526–535; that stretch reads DLDSTGNSLN. Residues 614–636 are polybasic cluster (PBR); the sequence is KHGFSWAVPKFMKRIKVPDYKDR. Residues 641 to 847 form the Rho-GAP domain; it reads VPLTVNVQRT…HMIAECKKLF (207 aa). Positions 877-1084 constitute an START domain; that stretch reads RNDESADYQH…RDSFSNQNTE (208 aa).

As to quaternary structure, interacts with EF1A1, facilitates EF1A1 distribution to the membrane periphery and ruffles upon growth factor stimulation and suppresses cell migration. Interacts with tensin TNS1 (via N-terminus); the interaction is decreased by phosphorylation of TNS1. Interacts with TNS3 and PTEN; in resting cells, interacts with TNS3 (via C2 tensin-type domain) but, following growth factor stimulation, TNS3 and PTEN are phosphorylated which leads to weakened interaction with TNS3 and enhanced interaction with PTEN. Interacts (via C-terminus) with tensin TNS4 (via SH2 domain); the interaction is independent of tyrosine phosphorylation of DLC1.

It is found in the cytoplasm. The protein resides in the cell junction. Its subcellular location is the focal adhesion. The protein localises to the membrane. Functions as a GTPase-activating protein for the small GTPases RHOA, RHOB, RHOC and CDC42, terminating their downstream signaling. This induces morphological changes and detachment through cytoskeletal reorganization, playing a critical role in biological processes such as cell migration and proliferation. Also functions in vivo as an activator of the phospholipase PLCD1. Active DLC1 increases cell migration velocity but reduces directionality. Required for growth factor-induced epithelial cell migration; in resting cells, interacts with TNS3 while PTEN interacts with the p85 regulatory subunit of the PI3K kinase complex but growth factor stimulation induces phosphorylation of TNS3 and PTEN, causing them to change their binding preference so that PTEN interacts with DLC1 and TNS3 interacts with p85. The PTEN-DLC1 complex translocates to the posterior of migrating cells to activate RHOA while the TNS3-p85 complex translocates to the leading edge of migrating cells to promote RAC1 activation. This chain is Rho GTPase-activating protein 7 (DLC1), found in Canis lupus familiaris (Dog).